A 350-amino-acid polypeptide reads, in one-letter code: Phenylalanine--tRNA ligase alpha subunit (350 aa).

Position 271 (Glu-271) interacts with Mg(2+).

It belongs to the class-II aminoacyl-tRNA synthetase family. Phe-tRNA synthetase alpha subunit type 1 subfamily. In terms of assembly, tetramer of two alpha and two beta subunits. Mg(2+) is required as a cofactor.

It is found in the cytoplasm. It carries out the reaction tRNA(Phe) + L-phenylalanine + ATP = L-phenylalanyl-tRNA(Phe) + AMP + diphosphate + H(+). The sequence is that of Phenylalanine--tRNA ligase alpha subunit from Paracidovorax citrulli (strain AAC00-1) (Acidovorax citrulli).